A 430-amino-acid chain; its full sequence is Histidinol dehydrogenase (430 aa).

Positions 237, 259, and 262 each coordinate substrate. Zn(2+)-binding residues include Q259 and H262. Active-site proton acceptor residues include E327 and H328. Residues H328, D361, E415, and H420 each coordinate substrate. Position 361 (D361) interacts with Zn(2+). A Zn(2+)-binding site is contributed by H420.

The protein belongs to the histidinol dehydrogenase family. It depends on Zn(2+) as a cofactor.

It catalyses the reaction L-histidinol + 2 NAD(+) + H2O = L-histidine + 2 NADH + 3 H(+). It functions in the pathway amino-acid biosynthesis; L-histidine biosynthesis; L-histidine from 5-phospho-alpha-D-ribose 1-diphosphate: step 9/9. In terms of biological role, catalyzes the sequential NAD-dependent oxidations of L-histidinol to L-histidinaldehyde and then to L-histidine. The protein is Histidinol dehydrogenase of Mesorhizobium japonicum (strain LMG 29417 / CECT 9101 / MAFF 303099) (Mesorhizobium loti (strain MAFF 303099)).